Consider the following 457-residue polypeptide: Siroheme synthase (457 aa).

The precorrin-2 dehydrogenase /sirohydrochlorin ferrochelatase stretch occupies residues 1–204; it reads MDHLPIFCQL…ADEKAVNATT (204 aa). Residues 22–23 and 43–44 contribute to the NAD(+) site; these read DV and LT. S128 is subject to Phosphoserine. Positions 216–457 are uroporphyrinogen-III C-methyltransferase; sequence GEVVLVGAGP…RDKLNWFSNH (242 aa). P225 is a binding site for S-adenosyl-L-methionine. Catalysis depends on D248, which acts as the Proton acceptor. Catalysis depends on K270, which acts as the Proton donor. Residues 301 to 303, I306, 331 to 332, M382, and G411 each bind S-adenosyl-L-methionine; these read GGD and TA.

This sequence in the N-terminal section; belongs to the precorrin-2 dehydrogenase / sirohydrochlorin ferrochelatase family. It in the C-terminal section; belongs to the precorrin methyltransferase family.

The enzyme catalyses uroporphyrinogen III + 2 S-adenosyl-L-methionine = precorrin-2 + 2 S-adenosyl-L-homocysteine + H(+). The catalysed reaction is precorrin-2 + NAD(+) = sirohydrochlorin + NADH + 2 H(+). It catalyses the reaction siroheme + 2 H(+) = sirohydrochlorin + Fe(2+). Its pathway is cofactor biosynthesis; adenosylcobalamin biosynthesis; precorrin-2 from uroporphyrinogen III: step 1/1. It functions in the pathway cofactor biosynthesis; adenosylcobalamin biosynthesis; sirohydrochlorin from precorrin-2: step 1/1. The protein operates within porphyrin-containing compound metabolism; siroheme biosynthesis; precorrin-2 from uroporphyrinogen III: step 1/1. It participates in porphyrin-containing compound metabolism; siroheme biosynthesis; siroheme from sirohydrochlorin: step 1/1. Its pathway is porphyrin-containing compound metabolism; siroheme biosynthesis; sirohydrochlorin from precorrin-2: step 1/1. In terms of biological role, multifunctional enzyme that catalyzes the SAM-dependent methylations of uroporphyrinogen III at position C-2 and C-7 to form precorrin-2 via precorrin-1. Then it catalyzes the NAD-dependent ring dehydrogenation of precorrin-2 to yield sirohydrochlorin. Finally, it catalyzes the ferrochelation of sirohydrochlorin to yield siroheme. In Salmonella schwarzengrund (strain CVM19633), this protein is Siroheme synthase.